Here is a 59-residue protein sequence, read N- to C-terminus: Large ribosomal subunit protein bL33 (59 aa).

Belongs to the bacterial ribosomal protein bL33 family.

In Neorickettsia sennetsu (strain ATCC VR-367 / Miyayama) (Ehrlichia sennetsu), this protein is Large ribosomal subunit protein bL33.